The following is a 384-amino-acid chain: tRNA(Met) cytidine acetate ligase (384 aa).

Residues 7 to 20 (VAEYNPFHSGHEFL), Gly101, Asn153, and Arg178 each bind ATP.

Belongs to the TmcAL family.

The protein localises to the cytoplasm. It catalyses the reaction cytidine(34) in elongator tRNA(Met) + acetate + ATP = N(4)-acetylcytidine(34) in elongator tRNA(Met) + AMP + diphosphate. Functionally, catalyzes the formation of N(4)-acetylcytidine (ac(4)C) at the wobble position of elongator tRNA(Met), using acetate and ATP as substrates. First activates an acetate ion to form acetyladenylate (Ac-AMP) and then transfers the acetyl group to tRNA to form ac(4)C34. The polypeptide is tRNA(Met) cytidine acetate ligase (Lactobacillus delbrueckii subsp. bulgaricus (strain ATCC 11842 / DSM 20081 / BCRC 10696 / JCM 1002 / NBRC 13953 / NCIMB 11778 / NCTC 12712 / WDCM 00102 / Lb 14)).